The sequence spans 239 residues: Ribonuclease PH (239 aa).

Residues Arg87 and 125-127 each bind phosphate; that span reads GTR.

The protein belongs to the RNase PH family. Homohexameric ring arranged as a trimer of dimers.

The enzyme catalyses tRNA(n+1) + phosphate = tRNA(n) + a ribonucleoside 5'-diphosphate. Its function is as follows. Phosphorolytic 3'-5' exoribonuclease that plays an important role in tRNA 3'-end maturation. Removes nucleotide residues following the 3'-CCA terminus of tRNAs; can also add nucleotides to the ends of RNA molecules by using nucleoside diphosphates as substrates, but this may not be physiologically important. Probably plays a role in initiation of 16S rRNA degradation (leading to ribosome degradation) during starvation. The chain is Ribonuclease PH from Syntrophomonas wolfei subsp. wolfei (strain DSM 2245B / Goettingen).